Consider the following 107-residue polypeptide: uncharacterized protein (107 aa).

The segment at 86–107 (KRAETARLPAATPQKRTGPARG) is disordered.

This is an uncharacterized protein from Saccharomyces cerevisiae (strain ATCC 204508 / S288c) (Baker's yeast).